The primary structure comprises 280 residues: Large ribosomal subunit protein uL2 (280 aa).

Disordered stretches follow at residues 32-54 and 221-280; these read SLLV…SRHM and RGMA…DSKK. Over residues 37–49 the composition is skewed to polar residues; that stretch reads NKSTGGRNNNGRV. Residues 232–242 show a composition bias toward gly residues; that stretch reads MGGGEGKSKSG. Residues 257–280 are compositionally biased toward basic residues; that stretch reads KGLKTRKRKKASSKLIVRRRDSKK.

This sequence belongs to the universal ribosomal protein uL2 family. In terms of assembly, part of the 50S ribosomal subunit. Forms a bridge to the 30S subunit in the 70S ribosome.

Functionally, one of the primary rRNA binding proteins. Required for association of the 30S and 50S subunits to form the 70S ribosome, for tRNA binding and peptide bond formation. It has been suggested to have peptidyltransferase activity; this is somewhat controversial. Makes several contacts with the 16S rRNA in the 70S ribosome. The sequence is that of Large ribosomal subunit protein uL2 from Chloroherpeton thalassium (strain ATCC 35110 / GB-78).